An 82-amino-acid chain; its full sequence is Toxin TdNa6 (82 aa).

Residues 1 to 20 form the signal peptide; sequence MKGMIMLISCLMLIEVVVGG. In terms of domain architecture, LCN-type CS-alpha/beta spans 21–82; it reads KEGYLLDRSN…KMWHLKTNKC (62 aa). 4 cysteine pairs are disulfide-bonded: Cys32-Cys82, Cys36-Cys58, Cys44-Cys63, and Cys48-Cys65.

This sequence belongs to the long (4 C-C) scorpion toxin superfamily. Sodium channel inhibitor family. Beta subfamily. Expressed by the venom gland.

It localises to the secreted. Its function is as follows. Beta toxins bind voltage-independently at site-4 of sodium channels (Nav) and shift the voltage of activation toward more negative potentials thereby affecting sodium channel activation and promoting spontaneous and repetitive firing. Is toxic to arthropods. The chain is Toxin TdNa6 from Tityus discrepans (Venezuelan scorpion).